The chain runs to 141 residues: Hemoglobin subunit alpha-1 (141 aa).

The Globin domain occupies 1–141 (VLSPEDKNNV…VSTVLTSKYR (141 aa)). His58 is an O2 binding site. His87 contributes to the heme b binding site.

The protein belongs to the globin family. As to quaternary structure, heterotetramer of two alpha chains and two beta chains. In terms of tissue distribution, red blood cells.

In terms of biological role, involved in oxygen transport from the lung to the various peripheral tissues. This chain is Hemoglobin subunit alpha-1, found in Tadarida brasiliensis (Brazilian free-tailed bat).